Here is a 125-residue protein sequence, read N- to C-terminus: Calcitonin receptor-stimulating peptide 3 (125 aa).

The signal sequence occupies residues 1-25 (MGFWKFPPFLILSILVLYQAGMLHA). The propeptide occupies 26–79 (APFRMALGSSFDSATLTEEEMSLLLVAMVKDYVQMKATVLEQETEDFSITTQER). Cys81 and Cys86 form a disulfide bridge. Residue Leu116 is modified to Leucine amide. Residues 122–125 (QPQA) constitute a propeptide that is removed on maturation.

Belongs to the calcitonin family. As to expression, mainly expressed in the thyroid gland and CNS. Found in the nerve cells of cerebrum, hippocampus, hypothalamus, pons/midbrain and thalamus.

The protein localises to the secreted. This Sus scrofa (Pig) protein is Calcitonin receptor-stimulating peptide 3 (CRSP3).